Here is a 584-residue protein sequence, read N- to C-terminus: DNA ligase (584 aa).

Glutamate 249 is an ATP binding site. Lysine 251 serves as the catalytic N6-AMP-lysine intermediate. ATP contacts are provided by arginine 256, arginine 271, glutamate 301, phenylalanine 341, arginine 416, and lysine 422.

It belongs to the ATP-dependent DNA ligase family. Mg(2+) serves as cofactor.

It carries out the reaction ATP + (deoxyribonucleotide)n-3'-hydroxyl + 5'-phospho-(deoxyribonucleotide)m = (deoxyribonucleotide)n+m + AMP + diphosphate.. DNA ligase that seals nicks in double-stranded DNA during DNA replication, DNA recombination and DNA repair. The sequence is that of DNA ligase from Pyrobaculum islandicum (strain DSM 4184 / JCM 9189 / GEO3).